A 539-amino-acid polypeptide reads, in one-letter code: MADSPGCCSIWARCLHCLYSCHWRKYPKQKMQTSKCDCIWFGLLFLTFLLSLGWLYIGLILLNDLHNFNEFLFRHWGHWMDWSLIVLLVVSLLVTYASLLLLLGLLLQLCGQPLHLHSLHKVLLLLIVLLVAAGLVGLDIQWRQEWHSLRLSLQATAPFLHIGAVAGITLLAWPVADTFYRIHPRGPKVLLLLLFFGVTLVIYLMPLLFISSPCIMKLRDLPPKPGLVGHRGAPMLAPENTLMSLRKTAECGAAVFETDVMVSSDGVPFLMHDERLSRTTNVASVFPERISAHSSDFSWAELQRLNAGTWFLERQPFWGAKKLSGSDRKEAENQTIPALEELLKEAAALNLSIMFDLRRPPRNHTYYDTFVNQTLEAVLSANVSQAMVLWLPDEDRANVQQRAPRMRQIYGHQGGNWTERPQFLNLPYQDLPALDIKALHQDNISVNLFVVNKPWLFSLLWCAGVDSVTTNACQLLQQMQNPLWLLPPQKYLMIWVITDCASILLLLSIFLLRGGCAKRNRTGLETAVLLTKINNFASE.

Residues 1–40 (MADSPGCCSIWARCLHCLYSCHWRKYPKQKMQTSKCDCIW) are Cytoplasmic-facing. Residues 41-61 (FGLLFLTFLLSLGWLYIGLIL) traverse the membrane as a helical segment. At 62–83 (LNDLHNFNEFLFRHWGHWMDWS) the chain is on the extracellular side. The chain crosses the membrane as a helical span at residues 84-104 (LIVLLVVSLLVTYASLLLLLG). Over 105 to 121 (LLLQLCGQPLHLHSLHK) the chain is Cytoplasmic. The helical transmembrane segment at 122 to 142 (VLLLLIVLLVAAGLVGLDIQW) threads the bilayer. Topologically, residues 143-154 (RQEWHSLRLSLQ) are extracellular. Residues 155–175 (ATAPFLHIGAVAGITLLAWPV) traverse the membrane as a helical segment. Topologically, residues 176–189 (ADTFYRIHPRGPKV) are cytoplasmic. A helical transmembrane segment spans residues 190-210 (LLLLLFFGVTLVIYLMPLLFI). Residues 211 to 491 (SSPCIMKLRD…PLWLLPPQKY (281 aa)) lie on the Extracellular side of the membrane. Residues 225-480 (PGLVGHRGAP…NACQLLQQMQ (256 aa)) enclose the GP-PDE domain. E257, D259, and H272 together coordinate a divalent metal cation. An N-linked (GlcNAc...) asparagine glycan is attached at N333. A helical transmembrane segment spans residues 492–512 (LMIWVITDCASILLLLSIFLL). Over 513–539 (RGGCAKRNRTGLETAVLLTKINNFASE) the chain is Cytoplasmic.

The protein belongs to the glycerophosphoryl diester phosphodiesterase family. Ca(2+) serves as cofactor. As to expression, detected in spleen, femur and calvaria.

It is found in the cell membrane. The protein resides in the cytoplasm. The protein localises to the cytoskeleton. It carries out the reaction sn-glycero-3-phospho-1D-myo-inositol + H2O = 1D-myo-inositol 1-phosphate + glycerol + H(+). Has glycerophosphoinositol inositolphosphodiesterase activity and specifically hydrolyzes glycerophosphoinositol, with no activity for other substrates such as glycerophosphoinositol 4-phosphate, glycerophosphocholine, glycerophosphoethanolamine, and glycerophosphoserine. Accelerates the program of osteoblast differentiation and growth. May play a role in remodeling of the actin cytoskeleton. The chain is Glycerophosphoinositol inositolphosphodiesterase GDPD2 (Gdpd2) from Mus musculus (Mouse).